The primary structure comprises 525 residues: Transcriptional regulatory protein TOD6 (525 aa).

Positions 22-82 (GFSILSKHPH…NNPSSWDPSD (61 aa)) are disordered. Positions 35–47 (LVHSHSLSHTNAK) are enriched in polar residues. Over residues 61–71 (STNKEEAESLK) the composition is skewed to basic and acidic residues. One can recognise an HTH myb-type domain in the interval 67–124 (AESLKKNNPSSWDPSDDIKLRHLKEIKNLGWKEIAHHFPNRTPNACQFRWRRLKSGNL). The segment at residues 97 to 120 (WKEIAHHFPNRTPNACQFRWRRLK) is a DNA-binding region (H-T-H motif). Ser280 carries the post-translational modification Phosphoserine. Residues 283 to 308 (PSTQIPHSTTKTRKNSHSVISSRRSS) form a disordered region. A compositionally biased stretch (low complexity) spans 299–308 (HSVISSRRSS). Phosphoserine occurs at positions 333, 341, and 366. The segment at 451–510 (TNEGCKDEEEEDDIDPLHKENGINTPSQQSQNYGMLEAKHDNPKSSELSSMTSANDIRNE) is disordered. 2 stretches are compositionally biased toward polar residues: residues 472–483 (GINTPSQQSQNY) and 495–506 (SSELSSMTSAND).

Belongs to the DOT6 family. Component of the RPD3C(L) complex composed of at least ASH1, CTI6, DEP1, DOT6, PHO23, RPD3, RXT2, RXT3, SAP30, SDS3, SIN3, TOD6; UME1 and UME6.

The protein resides in the cytoplasm. Its subcellular location is the nucleus. Functionally, component of the RPD3 histone deacetylase complex RPD3C(L) responsible for the deacetylation of lysine residues on the N-terminal part of the core histones (H2A, H2B, H3 and H4). Histone deacetylation gives a tag for epigenetic repression and plays an important role in transcriptional regulation, cell cycle progression and developmental events. TOD6 binds to sequences containing the core CGATG, which resembles the PAC (Polymerase A and C) motif. This is Transcriptional regulatory protein TOD6 (TOD6) from Saccharomyces cerevisiae (strain ATCC 204508 / S288c) (Baker's yeast).